Here is a 93-residue protein sequence, read N- to C-terminus: Large ribosomal subunit protein uL23 (93 aa).

This sequence belongs to the universal ribosomal protein uL23 family. As to quaternary structure, part of the 50S ribosomal subunit. Contacts protein L29, and trigger factor when it is bound to the ribosome.

In terms of biological role, one of the early assembly proteins it binds 23S rRNA. One of the proteins that surrounds the polypeptide exit tunnel on the outside of the ribosome. Forms the main docking site for trigger factor binding to the ribosome. This chain is Large ribosomal subunit protein uL23, found in Campylobacter lari (strain RM2100 / D67 / ATCC BAA-1060).